The primary structure comprises 622 residues: Sodium-dependent serotonin transporter (622 aa).

A disordered region spans residues 1 to 53 (MDRSGSSDFAGAAATTGRSNPAPWSDDKESPNNEDDSNEDDGDHTTPAKVTDP). The Cytoplasmic segment spans residues 1-82 (MDRSGSSDFA…TRETWGQKAE (82 aa)). Acidic residues predominate over residues 32-42 (NNEDDSNEDDG). Transmembrane regions (helical) follow at residues 83-103 (FLLAVIGFAVDLGNVWRFPYI), 111-130 (AFLVPYCLFLIFGGLPLFYM), and 155-175 (GVGYAICLIDIYMGMYYNTII). Na(+) is bound by residues Gly-89, Ala-91, Val-92, and Asn-96. The Extracellular portion of the chain corresponds to 176-244 (GWAVYYLFAS…NGLDFMGPVK (69 aa)). The cysteines at positions 195 and 204 are disulfide-linked. The N-linked (GlcNAc...) asparagine glycan is linked to Asn-211. A run of 5 helical transmembrane segments spans residues 245–263 (PTLALCVFGVFVLVYFSLW), 272–289 (VVWVTALAPYVVLIILLV), 325–342 (IFFSLGPGFGTLLALSSY), 354–375 (LITSSINCLTSFLAGFVIFSVL), and 408–427 (MSGSVFWSIIFFLMLITLGL). Residues Ser-328, Asn-360, Leu-425, Asp-428, and Ser-429 each coordinate Na(+). Helical transmembrane passes span 455–473 (LFVLLLLAFIFLCALPTMT), 489–509 (GLAILFVVFVEAAGVFWFYGV), 530–549 (ICWTYISPVFLLTIFIFSIM), and 568–586 (VGWAVTCSSVLCIPMYIIY). Residues 587 to 622 (KFFFASKGGCRQRLQESFQPEDNCGSVVPGQQGTSV) are Cytoplasmic-facing.

The protein belongs to the sodium:neurotransmitter symporter (SNF) (TC 2.A.22) family. Expression is specific to cell bodies in the ventral ganglion of the embryonic and larval nervous system.

Its subcellular location is the cell membrane. Terminates the action of serotonin by its high affinity sodium-dependent reuptake into presynaptic terminals. This chain is Sodium-dependent serotonin transporter (SerT), found in Drosophila melanogaster (Fruit fly).